The sequence spans 458 residues: Transcription factor Atf1 (458 aa).

Residues 347–410 (EEKRRNFLER…VNLKTLLLAH (64 aa)) form the bZIP domain. Residues 349-378 (KRRNFLERNRVAALKCRQRKKQWLANLQNK) form a basic motif region. Positions 389-403 (LTATVTQLREEIVNL) are leucine-zipper.

Belongs to the bZIP family.

Its subcellular location is the nucleus. In terms of biological role, transcription factor that positively regulates vegetative growth, reproduction, and osmotic stress response. The chain is Transcription factor Atf1 from Penicillium expansum (Blue mold rot fungus).